Reading from the N-terminus, the 399-residue chain is Elongation factor Tu (399 aa).

Residues 10-204 form the tr-type G domain; that stretch reads KPHVNIGTIG…AVDASIPEPE (195 aa). A G1 region spans residues 19-26; that stretch reads GHVDHGKT. 19–26 contributes to the GTP binding site; it reads GHVDHGKT. T26 is a Mg(2+) binding site. The tract at residues 60 to 64 is G2; it reads GITIN. Residues 81 to 84 form a G3 region; it reads DCPG. GTP is bound by residues 81-85 and 136-139; these read DCPGH and NKCD. Residues 136 to 139 form a G4 region; that stretch reads NKCD. Residues 174 to 176 form a G5 region; the sequence is SGL.

This sequence belongs to the TRAFAC class translation factor GTPase superfamily. Classic translation factor GTPase family. EF-Tu/EF-1A subfamily. In terms of assembly, monomer.

It is found in the cytoplasm. It catalyses the reaction GTP + H2O = GDP + phosphate + H(+). Functionally, GTP hydrolase that promotes the GTP-dependent binding of aminoacyl-tRNA to the A-site of ribosomes during protein biosynthesis. This Prochlorococcus marinus (strain NATL1A) protein is Elongation factor Tu.